A 427-amino-acid polypeptide reads, in one-letter code: Tyrosine--tRNA ligase (427 aa).

Y33 serves as a coordination point for L-tyrosine. The short motif at 38–47 (PTAPSLHVGN) is the 'HIGH' region element. Positions 168 and 172 each coordinate L-tyrosine. A 'KMSKS' region motif is present at residues 228–232 (KFGKS). An ATP-binding site is contributed by K231. An S4 RNA-binding domain is found at 358 to 426 (EHMLDLVAST…GKKHHYLIKV (69 aa)).

This sequence belongs to the class-I aminoacyl-tRNA synthetase family. TyrS type 1 subfamily. Homodimer.

It is found in the cytoplasm. The enzyme catalyses tRNA(Tyr) + L-tyrosine + ATP = L-tyrosyl-tRNA(Tyr) + AMP + diphosphate + H(+). Its function is as follows. Catalyzes the attachment of tyrosine to tRNA(Tyr) in a two-step reaction: tyrosine is first activated by ATP to form Tyr-AMP and then transferred to the acceptor end of tRNA(Tyr). This Amoebophilus asiaticus (strain 5a2) protein is Tyrosine--tRNA ligase.